We begin with the raw amino-acid sequence, 419 residues long: Tyrosine--tRNA ligase (419 aa).

Residue Y42 participates in L-tyrosine binding. The 'HIGH' region signature appears at 47–56; the sequence is CTAPSLHVGS. Residues Y179 and Q183 each contribute to the L-tyrosine site. A 'KMSKS' region motif is present at residues 239–243; it reads KMGKT. K242 is an ATP binding site. Residues 353–419 enclose the S4 RNA-binding domain; the sequence is LGVLAAFVKA…RKRHVLLKLV (67 aa).

The protein belongs to the class-I aminoacyl-tRNA synthetase family. TyrS type 1 subfamily. As to quaternary structure, homodimer.

The protein localises to the cytoplasm. The catalysed reaction is tRNA(Tyr) + L-tyrosine + ATP = L-tyrosyl-tRNA(Tyr) + AMP + diphosphate + H(+). In terms of biological role, catalyzes the attachment of tyrosine to tRNA(Tyr) in a two-step reaction: tyrosine is first activated by ATP to form Tyr-AMP and then transferred to the acceptor end of tRNA(Tyr). The polypeptide is Tyrosine--tRNA ligase (Methylocella silvestris (strain DSM 15510 / CIP 108128 / LMG 27833 / NCIMB 13906 / BL2)).